We begin with the raw amino-acid sequence, 322 residues long: Carnosine N-methyltransferase 2 (322 aa).

E58 provides a ligand contact to substrate. G90, E119, S150, and I172 together coordinate S-adenosyl-L-methionine. A substrate-binding site is contributed by N313.

It belongs to the class I-like SAM-binding methyltransferase superfamily. HNMT family. As to quaternary structure, monomer.

It catalyses the reaction carnosine + S-adenosyl-L-methionine = anserine + S-adenosyl-L-homocysteine + H(+). In terms of biological role, N-methyltransferase that mediates the formation of anserine (beta-alanyl-N(Pi)-methyl-L-histidine) from carnosine. Anserine, a methylated derivative of carnosine (beta-alanyl-L-histidine), is an abundant constituent of vertebrate skeletal muscles. This is Carnosine N-methyltransferase 2 from Gallus gallus (Chicken).